A 101-amino-acid chain; its full sequence is Signal recognition particle 19 kDa protein (101 aa).

It belongs to the SRP19 family. Part of the signal recognition particle protein translocation system, which is composed of SRP and FtsY. Archaeal SRP consists of a 7S RNA molecule of 300 nucleotides and two protein subunits: SRP54 and SRP19.

It localises to the cytoplasm. Functionally, involved in targeting and insertion of nascent membrane proteins into the cytoplasmic membrane. Binds directly to 7S RNA and mediates binding of the 54 kDa subunit of the SRP. This is Signal recognition particle 19 kDa protein from Methanosarcina barkeri (strain Fusaro / DSM 804).